Here is a 190-residue protein sequence, read N- to C-terminus: MTEIVKVREQLQISLSDFQEQASLQSGQIFVVGCSTSEVLGERIGTSGTMEVAEAIFSELKQFQDQTGIELAFQCCEHLNRALVVERELAMKYQFEIVTVTPVRSAGGALATYAYHNLKDPVVIEFIKADAGMDIGDTFIGMHLKHVAVPVRTSVKEIGSAHVTMATTRGKLIGGARAVYAAKEETITCR.

Belongs to the UPF0340 family.

This is UPF0340 protein BCE33L5016 from Bacillus cereus (strain ZK / E33L).